Here is a 305-residue protein sequence, read N- to C-terminus: Carbamate kinase (305 aa).

This sequence belongs to the carbamate kinase family.

The protein localises to the cytoplasm. It catalyses the reaction hydrogencarbonate + NH4(+) + ATP = carbamoyl phosphate + ADP + H2O + H(+). The protein operates within metabolic intermediate metabolism; carbamoyl phosphate degradation; CO(2) and NH(3) from carbamoyl phosphate: step 1/1. The chain is Carbamate kinase (arcC) from Thermoplasma acidophilum (strain ATCC 25905 / DSM 1728 / JCM 9062 / NBRC 15155 / AMRC-C165).